We begin with the raw amino-acid sequence, 448 residues long: UPF0210 protein Pisl_0759 (448 aa).

It belongs to the UPF0210 family.

The chain is UPF0210 protein Pisl_0759 from Pyrobaculum islandicum (strain DSM 4184 / JCM 9189 / GEO3).